We begin with the raw amino-acid sequence, 626 residues long: NAD-dependent malic enzyme, mitochondrial (626 aa).

Residues 1 to 34 (MAIFSNQMRLSSTLLKRLHQRVAAAVNSSSSRNF) constitute a mitochondrion transit peptide. R91 and R125 together coordinate fumarate. The Proton donor role is filled by Y146. R199 serves as a coordination point for (S)-malate. R199 is a binding site for NAD(+). K217 serves as the catalytic Proton acceptor. Residues E288, D289, and D312 each contribute to the a divalent metal cation site. NAD(+) is bound by residues A348 and A351. The (S)-malate site is built by N467 and N512.

Belongs to the malic enzymes family. As to quaternary structure, heterodimer of two related subunits. Mg(2+) is required as a cofactor. Mn(2+) serves as cofactor.

Its subcellular location is the mitochondrion matrix. It catalyses the reaction (S)-malate + NAD(+) = pyruvate + CO2 + NADH. This is NAD-dependent malic enzyme, mitochondrial from Solanum tuberosum (Potato).